The chain runs to 262 residues: tRNA pseudouridine synthase A (262 aa).

D56 serves as the catalytic Nucleophile. Y114 contributes to the substrate binding site.

The protein belongs to the tRNA pseudouridine synthase TruA family. Homodimer.

The enzyme catalyses uridine(38/39/40) in tRNA = pseudouridine(38/39/40) in tRNA. In terms of biological role, formation of pseudouridine at positions 38, 39 and 40 in the anticodon stem and loop of transfer RNAs. The protein is tRNA pseudouridine synthase A of Lactiplantibacillus plantarum (strain ATCC BAA-793 / NCIMB 8826 / WCFS1) (Lactobacillus plantarum).